The following is a 165-amino-acid chain: Crossover junction endodeoxyribonuclease RuvC (165 aa).

Active-site residues include aspartate 7, glutamate 67, and aspartate 140. Mg(2+)-binding residues include aspartate 7, glutamate 67, and aspartate 140.

It belongs to the RuvC family. In terms of assembly, homodimer which binds Holliday junction (HJ) DNA. The HJ becomes 2-fold symmetrical on binding to RuvC with unstacked arms; it has a different conformation from HJ DNA in complex with RuvA. In the full resolvosome a probable DNA-RuvA(4)-RuvB(12)-RuvC(2) complex forms which resolves the HJ. It depends on Mg(2+) as a cofactor.

The protein localises to the cytoplasm. The enzyme catalyses Endonucleolytic cleavage at a junction such as a reciprocal single-stranded crossover between two homologous DNA duplexes (Holliday junction).. The RuvA-RuvB-RuvC complex processes Holliday junction (HJ) DNA during genetic recombination and DNA repair. Endonuclease that resolves HJ intermediates. Cleaves cruciform DNA by making single-stranded nicks across the HJ at symmetrical positions within the homologous arms, yielding a 5'-phosphate and a 3'-hydroxyl group; requires a central core of homology in the junction. The consensus cleavage sequence is 5'-(A/T)TT(C/G)-3'. Cleavage occurs on the 3'-side of the TT dinucleotide at the point of strand exchange. HJ branch migration catalyzed by RuvA-RuvB allows RuvC to scan DNA until it finds its consensus sequence, where it cleaves and resolves the cruciform DNA. This Caldanaerobacter subterraneus subsp. tengcongensis (strain DSM 15242 / JCM 11007 / NBRC 100824 / MB4) (Thermoanaerobacter tengcongensis) protein is Crossover junction endodeoxyribonuclease RuvC.